A 465-amino-acid chain; its full sequence is Cysteine--tRNA ligase (465 aa).

C27 lines the Zn(2+) pocket. The 'HIGH' region signature appears at 29–39; that stretch reads PTVYNYIHIGN. Zn(2+)-binding residues include C207, H232, and E236. Positions 264–268 match the 'KMSKS' region motif; it reads KMSKS. K267 contributes to the ATP binding site.

It belongs to the class-I aminoacyl-tRNA synthetase family. In terms of assembly, monomer. The cofactor is Zn(2+).

Its subcellular location is the cytoplasm. It catalyses the reaction tRNA(Cys) + L-cysteine + ATP = L-cysteinyl-tRNA(Cys) + AMP + diphosphate. The protein is Cysteine--tRNA ligase of Clostridioides difficile (strain 630) (Peptoclostridium difficile).